Here is a 77-residue protein sequence, read N- to C-terminus: U10-lycotoxin-Ls1a (77 aa).

A signal peptide spans 1–20; sequence MKLIIFTGLVLFAIVSLIEA. A propeptide spanning residues 21-26 is cleaved from the precursor; sequence EEESGR.

This sequence belongs to the neurotoxin 19 (CSTX) family. 09 (U10-Lctx) subfamily. In terms of processing, contains 4 disulfide bonds. As to expression, expressed by the venom gland.

Its subcellular location is the secreted. This is U10-lycotoxin-Ls1a from Lycosa singoriensis (Wolf spider).